The following is an 89-amino-acid chain: UPF0237 protein Cgl1544/cg1742 (89 aa).

An ACT domain is found at 4–82; that stretch reads IMTVTGQDHT…LVIRIQSEAL (79 aa).

The protein belongs to the UPF0237 family.

The polypeptide is UPF0237 protein Cgl1544/cg1742 (Corynebacterium glutamicum (strain ATCC 13032 / DSM 20300 / JCM 1318 / BCRC 11384 / CCUG 27702 / LMG 3730 / NBRC 12168 / NCIMB 10025 / NRRL B-2784 / 534)).